A 142-amino-acid chain; its full sequence is Large-conductance mechanosensitive channel (142 aa).

3 consecutive transmembrane segments (helical) span residues 19–39 (VGIIIGAAFTAIVSSLVADLV), 41–61 (PFIALFTGGIDFSGWFYALDG), and 78–98 (FAFGNFIMAVINFLIIAFVVF).

It belongs to the MscL family. In terms of assembly, homopentamer.

The protein localises to the cell inner membrane. Functionally, channel that opens in response to stretch forces in the membrane lipid bilayer. May participate in the regulation of osmotic pressure changes within the cell. The chain is Large-conductance mechanosensitive channel from Roseobacter denitrificans (strain ATCC 33942 / OCh 114) (Erythrobacter sp. (strain OCh 114)).